A 509-amino-acid polypeptide reads, in one-letter code: ATP synthase subunit alpha (509 aa).

169-176 (GDRQTGKT) serves as a coordination point for ATP.

Belongs to the ATPase alpha/beta chains family. F-type ATPases have 2 components, CF(1) - the catalytic core - and CF(0) - the membrane proton channel. CF(1) has five subunits: alpha(3), beta(3), gamma(1), delta(1), epsilon(1). CF(0) has three main subunits: a(1), b(2) and c(9-12). The alpha and beta chains form an alternating ring which encloses part of the gamma chain. CF(1) is attached to CF(0) by a central stalk formed by the gamma and epsilon chains, while a peripheral stalk is formed by the delta and b chains.

The protein localises to the cell inner membrane. The catalysed reaction is ATP + H2O + 4 H(+)(in) = ADP + phosphate + 5 H(+)(out). Functionally, produces ATP from ADP in the presence of a proton gradient across the membrane. The alpha chain is a regulatory subunit. The chain is ATP synthase subunit alpha from Rhizobium leguminosarum bv. trifolii (strain WSM2304).